The following is a 100-amino-acid chain: Small ribosomal subunit protein bS6 (100 aa).

It belongs to the bacterial ribosomal protein bS6 family.

Functionally, binds together with bS18 to 16S ribosomal RNA. This chain is Small ribosomal subunit protein bS6, found in Enterococcus faecalis (strain ATCC 700802 / V583).